A 263-amino-acid polypeptide reads, in one-letter code: Putative hydro-lyase BPUM_0381 (263 aa).

The protein belongs to the D-glutamate cyclase family.

This Bacillus pumilus (strain SAFR-032) protein is Putative hydro-lyase BPUM_0381.